Consider the following 131-residue polypeptide: Large ribosomal subunit protein bL19 (131 aa).

The segment at 112-131 is disordered; the sequence is KSARIAERAGGPKASASTEA.

It belongs to the bacterial ribosomal protein bL19 family.

Functionally, this protein is located at the 30S-50S ribosomal subunit interface and may play a role in the structure and function of the aminoacyl-tRNA binding site. The chain is Large ribosomal subunit protein bL19 from Caulobacter vibrioides (strain ATCC 19089 / CIP 103742 / CB 15) (Caulobacter crescentus).